A 346-amino-acid chain; its full sequence is tRNA-specific 2-thiouridylase MnmA (346 aa).

6–13 (AMSGGTDS) lines the ATP pocket. Residue C90 is the Nucleophile of the active site. A disulfide bond links C90 and C187. G114 contributes to the ATP binding site. Positions 137 to 139 (KDQ) are interaction with tRNA. Catalysis depends on C187, which acts as the Cysteine persulfide intermediate. Positions 292–293 (RY) are interaction with tRNA.

The protein belongs to the MnmA/TRMU family.

Its subcellular location is the cytoplasm. It carries out the reaction S-sulfanyl-L-cysteinyl-[protein] + uridine(34) in tRNA + AH2 + ATP = 2-thiouridine(34) in tRNA + L-cysteinyl-[protein] + A + AMP + diphosphate + H(+). Catalyzes the 2-thiolation of uridine at the wobble position (U34) of tRNA, leading to the formation of s(2)U34. The protein is tRNA-specific 2-thiouridylase MnmA of Nitratidesulfovibrio vulgaris (strain ATCC 29579 / DSM 644 / CCUG 34227 / NCIMB 8303 / VKM B-1760 / Hildenborough) (Desulfovibrio vulgaris).